The following is a 375-amino-acid chain: Succinyl-diaminopimelate desuccinylase (375 aa).

His-66 is a Zn(2+) binding site. Asp-68 is an active-site residue. Asp-99 contacts Zn(2+). Glu-133 acts as the Proton acceptor in catalysis. Glu-134, Glu-162, and His-348 together coordinate Zn(2+).

It belongs to the peptidase M20A family. DapE subfamily. Homodimer. Requires Zn(2+) as cofactor. It depends on Co(2+) as a cofactor.

The catalysed reaction is N-succinyl-(2S,6S)-2,6-diaminopimelate + H2O = (2S,6S)-2,6-diaminopimelate + succinate. It participates in amino-acid biosynthesis; L-lysine biosynthesis via DAP pathway; LL-2,6-diaminopimelate from (S)-tetrahydrodipicolinate (succinylase route): step 3/3. In terms of biological role, catalyzes the hydrolysis of N-succinyl-L,L-diaminopimelic acid (SDAP), forming succinate and LL-2,6-diaminopimelate (DAP), an intermediate involved in the bacterial biosynthesis of lysine and meso-diaminopimelic acid, an essential component of bacterial cell walls. The polypeptide is Succinyl-diaminopimelate desuccinylase (Stenotrophomonas maltophilia (strain R551-3)).